The following is a 245-amino-acid chain: ATP synthase subunit a (245 aa).

The next 7 membrane-spanning stretches (helical) occupy residues 5–25 (LWFT…MMSV), 37–57 (ISNY…FFIA), 99–119 (YIVT…IPGF), 125–145 (FPSV…VHGL), 157–177 (FLGP…CSHF), 187–209 (LYAN…PLGF), and 221–241 (SLIQ…EATA).

It belongs to the ATPase A chain family. F-type ATPases have 2 components, CF(1) - the catalytic core - and CF(0) - the membrane proton channel. CF(1) has five subunits: alpha(3), beta(3), gamma(1), delta(1), epsilon(1). CF(0) has three main subunits: a(1), b(2) and c(9-12). The alpha and beta chains form an alternating ring which encloses part of the gamma chain. CF(1) is attached to CF(0) by a central stalk formed by the gamma and epsilon chains, while a peripheral stalk is formed by the delta and b chains.

It localises to the cell inner membrane. Its function is as follows. Key component of the proton channel; it plays a direct role in the translocation of protons across the membrane. This is ATP synthase subunit a from Koribacter versatilis (strain Ellin345).